Consider the following 176-residue polypeptide: Large ribosomal subunit protein uL10 (176 aa).

This sequence belongs to the universal ribosomal protein uL10 family. In terms of assembly, part of the ribosomal stalk of the 50S ribosomal subunit. The N-terminus interacts with L11 and the large rRNA to form the base of the stalk. The C-terminus forms an elongated spine to which L12 dimers bind in a sequential fashion forming a multimeric L10(L12)X complex.

Forms part of the ribosomal stalk, playing a central role in the interaction of the ribosome with GTP-bound translation factors. This chain is Large ribosomal subunit protein uL10 (rplJ), found in Streptomyces antibioticus.